Here is a 265-residue protein sequence, read N- to C-terminus: 6-carboxyhexanoate--CoA ligase (265 aa).

This sequence belongs to the BioW family. Homodimer. It depends on Mg(2+) as a cofactor.

The enzyme catalyses heptanedioate + ATP + CoA = 6-carboxyhexanoyl-CoA + AMP + diphosphate. It participates in metabolic intermediate metabolism; pimeloyl-CoA biosynthesis; pimeloyl-CoA from pimelate: step 1/1. Catalyzes the transformation of pimelate into pimeloyl-CoA with concomitant hydrolysis of ATP to AMP. This is 6-carboxyhexanoate--CoA ligase from Syntrophotalea carbinolica (strain DSM 2380 / NBRC 103641 / GraBd1) (Pelobacter carbinolicus).